We begin with the raw amino-acid sequence, 315 residues long: Methionyl-tRNA formyltransferase (315 aa).

Ser113 to Pro116 serves as a coordination point for (6S)-5,6,7,8-tetrahydrofolate.

It belongs to the Fmt family.

It catalyses the reaction L-methionyl-tRNA(fMet) + (6R)-10-formyltetrahydrofolate = N-formyl-L-methionyl-tRNA(fMet) + (6S)-5,6,7,8-tetrahydrofolate + H(+). Attaches a formyl group to the free amino group of methionyl-tRNA(fMet). The formyl group appears to play a dual role in the initiator identity of N-formylmethionyl-tRNA by promoting its recognition by IF2 and preventing the misappropriation of this tRNA by the elongation apparatus. This Escherichia coli O139:H28 (strain E24377A / ETEC) protein is Methionyl-tRNA formyltransferase.